The chain runs to 48 residues: U1-theraphotoxin-Agm1a (48 aa).

Intrachain disulfides connect cysteine 4–cysteine 34, cysteine 8–cysteine 40, and cysteine 22–cysteine 45. Position 44 is a methionine sulfoxide; partial (methionine 44).

It belongs to the neurotoxin 12 (Hwtx-2) family. 01 (Ap1a) subfamily. Expressed by the venom gland.

It localises to the secreted. Functionally, is toxic to both insects and mammals. Induces reversible paralysis when injected into S.frugiperda larvae. Reduces both the amplitude and frequency of responses from muscle (GF-TTM and GF-DLM) pathways in the D.melanogaster giant fiber circuit, suggesting an action at the neuromuscular junction, which is mediated by glutamatergic receptors. In mice, intracranial injection of 30 ug causes increased urination, myoclonus, hypermotility with circular movements followed by respiratory and generalized seizures resulting in death within 25-35 minutes of injection. The polypeptide is U1-theraphotoxin-Agm1a (Acanthoscurria gomesiana (Tarantula spider)).